The sequence spans 358 residues: Probable tartrate dehydrogenase/decarboxylase TtuC' (358 aa).

Mn(2+) contacts are provided by D222, D246, and D250.

It belongs to the isocitrate and isopropylmalate dehydrogenases family. Mg(2+) is required as a cofactor. It depends on Mn(2+) as a cofactor. Requires K(+) as cofactor.

It is found in the cytoplasm. It carries out the reaction tartrate + NAD(+) = 2-hydroxy-3-oxosuccinate + NADH + H(+). The enzyme catalyses (2R,3S)-tartrate + NAD(+) = 2-hydroxy-3-oxosuccinate + NADH + H(+). It catalyses the reaction (2R,3R)-tartrate + NAD(+) = 2-hydroxy-3-oxosuccinate + NADH + H(+). The catalysed reaction is (2R,3R)-tartrate + H(+) = (R)-glycerate + CO2. It carries out the reaction (R)-malate + NAD(+) = pyruvate + CO2 + NADH. It participates in carbohydrate acid metabolism; tartrate degradation; 2-hydroxy-3-oxosuccinate from L-tartrate: step 1/1. It functions in the pathway carbohydrate acid metabolism; tartrate degradation; 2-hydroxy-3-oxosuccinate from meso-tartrate: step 1/1. The protein operates within carbohydrate acid metabolism; tartrate degradation; D-glycerate from L-tartrate: step 1/1. Its function is as follows. Has multiple catalytic activities. Apart from catalyzing the oxidation of (+)-tartrate to oxaloglycolate, also converts meso-tartrate to D-glycerate and catalyzes the oxidative decarboxylation of D-malate to pyruvate. This Agrobacterium vitis (Rhizobium vitis) protein is Probable tartrate dehydrogenase/decarboxylase TtuC' (ttuC').